The primary structure comprises 261 residues: 5'-nucleotidase SurE (261 aa).

A divalent metal cation is bound by residues D8, D9, S43, and N96.

This sequence belongs to the SurE nucleotidase family. The cofactor is a divalent metal cation.

Its subcellular location is the cytoplasm. The catalysed reaction is a ribonucleoside 5'-phosphate + H2O = a ribonucleoside + phosphate. Its function is as follows. Nucleotidase that shows phosphatase activity on nucleoside 5'-monophosphates. This Roseobacter denitrificans (strain ATCC 33942 / OCh 114) (Erythrobacter sp. (strain OCh 114)) protein is 5'-nucleotidase SurE.